The primary structure comprises 247 residues: Segregation and condensation protein A (247 aa).

The protein belongs to the ScpA family. As to quaternary structure, component of a cohesin-like complex composed of ScpA, ScpB and the Smc homodimer, in which ScpA and ScpB bind to the head domain of Smc. The presence of the three proteins is required for the association of the complex with DNA.

It is found in the cytoplasm. Functionally, participates in chromosomal partition during cell division. May act via the formation of a condensin-like complex containing Smc and ScpB that pull DNA away from mid-cell into both cell halves. In Bacillus cereus (strain G9842), this protein is Segregation and condensation protein A.